A 317-amino-acid polypeptide reads, in one-letter code: tRNA(Ile)-lysidine synthase (317 aa).

30-35 provides a ligand contact to ATP; it reads SGGSDS.

This sequence belongs to the tRNA(Ile)-lysidine synthase family.

The protein resides in the cytoplasm. It catalyses the reaction cytidine(34) in tRNA(Ile2) + L-lysine + ATP = lysidine(34) in tRNA(Ile2) + AMP + diphosphate + H(+). Ligates lysine onto the cytidine present at position 34 of the AUA codon-specific tRNA(Ile) that contains the anticodon CAU, in an ATP-dependent manner. Cytidine is converted to lysidine, thus changing the amino acid specificity of the tRNA from methionine to isoleucine. In Chlamydia abortus (strain DSM 27085 / S26/3) (Chlamydophila abortus), this protein is tRNA(Ile)-lysidine synthase.